The chain runs to 506 residues: Chromodomain Y-like protein 2 (506 aa).

Residues 7–67 form the Chromo domain; sequence YEVERIVDKR…LHMSKDKRIK (61 aa). Residues 64 to 177 form a disordered region; the sequence is KRIKSGKQSS…RHFGNGSHQP (114 aa). Residues 88 to 98 show a composition bias toward basic and acidic residues; the sequence is KLSHRPSDPGK. Residues 101–120 show a composition bias toward basic residues; sequence GTSHKRKRINPPLAKPKKGY. Over residues 133–143 the composition is skewed to polar residues; the sequence is KTVSYRTTPSG.

Interacts (via chromo domain) with histone H3K9me3. Ubiquitously expressed.

The protein resides in the nucleus. This Homo sapiens (Human) protein is Chromodomain Y-like protein 2 (CDYL2).